The sequence spans 613 residues: Leucine-rich repeat receptor-like protein FASCIATED EAR2 (613 aa).

The N-terminal stretch at 1–28 (MLTATPLPHQLLATFLLVLASATQPAVP) is a signal peptide. Topologically, residues 29-573 (ASTDRAALLA…WLGGWHGENG (545 aa)) are extracellular. 17 LRR repeats span residues 79 to 103 (TPSV…PLAL), 104 to 128 (LRRL…LPRS), 130 to 150 (LALD…LPSS), 151 to 176 (LPAL…SFPA), 178 to 199 (LAAL…IVAD), 202 to 226 (NSAL…IAAV), 227 to 250 (RSLQ…IGNL), 251 to 274 (TYLQ…LAGC), 276 to 297 (QLLY…ELDA), 298 to 322 (LASL…LAGC), 324 to 346 (SLEV…VAKW), 347 to 370 (LSLK…MFSF), 372 to 394 (LLQW…GFNV), 435 to 459 (VQAT…LVDM), 460 to 483 (KGLE…LGGM), 484 to 507 (GRLH…IAAM), and 508 to 531 (TVLE…KFPG). N-linked (GlcNAc...) asparagine glycosylation is present at Asn-91. Asn-158 carries an N-linked (GlcNAc...) asparagine glycan. N-linked (GlcNAc...) asparagine glycosylation occurs at Asn-249. N-linked (GlcNAc...) asparagine glycosylation occurs at Asn-393. Asn-466 is a glycosylation site (N-linked (GlcNAc...) asparagine). Residue Asn-514 is glycosylated (N-linked (GlcNAc...) asparagine). The helical transmembrane segment at 574-597 (WVSLGAFCISTMTSFYVSLATLLC) threads the bilayer. The Cytoplasmic segment spans residues 598-613 (SSNARNFVFRPVRVEY).

Expressed in ear primordia, vegetative apex and young leaf tissues. Barely detected in expanded leaf tissues and not expressed in roots.

Its subcellular location is the cell membrane. Receptor-like protein that regulates shoot meristem proliferation. Based on additive and synergistic phenotypes of double mutants, it is probable that unlike CLV1 and CLV2 in A.thaliana, FAE2 and TD1 do not function exclusively in a single pathway. The chain is Leucine-rich repeat receptor-like protein FASCIATED EAR2 (FEA2) from Zea mays (Maize).